The chain runs to 304 residues: D-alanine--D-alanine ligase (304 aa).

Positions 99–293 (KKILRYEGIE…YSKLLDMIIE (195 aa)) constitute an ATP-grasp domain. Residue 126-181 (LDKLGFPLVVKPNSGGSSVGVKIVYDKDELISMLETVFEWDSEVVIEKYIKGEEIT) coordinates ATP. Positions 248, 260, and 262 each coordinate Mg(2+).

It belongs to the D-alanine--D-alanine ligase family. The cofactor is Mg(2+). Mn(2+) serves as cofactor.

It is found in the cytoplasm. It catalyses the reaction 2 D-alanine + ATP = D-alanyl-D-alanine + ADP + phosphate + H(+). The protein operates within cell wall biogenesis; peptidoglycan biosynthesis. Its function is as follows. Cell wall formation. In Bacillus anthracis (strain A0248), this protein is D-alanine--D-alanine ligase.